The chain runs to 681 residues: GAS2-like protein 1 (681 aa).

An N-acetylalanine modification is found at A2. Residues 27–148 (EAMKEDLAEW…CLLEVARRGA (122 aa)) form the Calponin-homology (CH) domain. 3 disordered regions span residues 168 to 204 (LRAAPPAPNAPAAGEDTTETAPAPGTPARGPRMTPSD), 278 to 509 (STAH…PLQL), and 536 to 681 (ASVT…DSWM). Residues 186 to 199 (ETAPAPGTPARGPR) show a composition bias toward low complexity. T193 is modified (phosphothreonine). The GAR domain maps to 203-275 (SDLRNLDELV…HYLDKHDPCR (73 aa)). Residues 291–303 (FSPQRVSPTTSPR) are compositionally biased toward polar residues. A phosphoserine mark is found at S306 and S316. Over residues 327–342 (STKEGPETPPRPRDQL) the composition is skewed to basic and acidic residues. T334 bears the Phosphothreonine mark. 2 positions are modified to phosphoserine: S352 and S355. The segment covering 354–365 (DSDSSASSAQSG) has biased composition (low complexity). A compositionally biased stretch (basic and acidic residues) spans 370–381 (RSDDTGTGPRRE). T391 is modified (phosphothreonine). Phosphoserine is present on S394. Basic and acidic residues predominate over residues 404 to 413 (QSRDRLDRGR). Residues S436, S438, S479, and S486 each carry the phosphoserine modification. Over residues 437–454 (QSREEQAVLLVRRDRDGQ) the composition is skewed to basic and acidic residues. A compositionally biased stretch (low complexity) spans 475 to 493 (PRARSPAAPRLSRVSSPSP). R487 bears the Omega-N-methylarginine mark. S490 and S492 each carry phosphoserine. A Phosphothreonine modification is found at T498. R504 is subject to Omega-N-methylarginine. Pro residues predominate over residues 542–556 (GPVPDPARAPDPPAP). Residues 557 to 571 (DSAYCSSSSSSSSLS) are compositionally biased toward low complexity. R633 carries the post-translational modification Omega-N-methylarginine. A compositionally biased stretch (basic and acidic residues) spans 634–644 (GRMDTQPDRKP). The residue at position 657 (S657) is a Phosphoserine.

The protein belongs to the GAS2 family. Interacts with MAPRE1.

Its subcellular location is the cytoplasm. The protein resides in the cytoskeleton. The protein localises to the stress fiber. Involved in the cross-linking of microtubules and microfilaments. Regulates microtubule dynamics and stability by interacting with microtubule plus-end tracking proteins, such as MAPRE1, to regulate microtubule growth along actin stress fibers. The chain is GAS2-like protein 1 (GAS2L1) from Homo sapiens (Human).